The primary structure comprises 177 residues: Peptide methionine sulfoxide reductase MsrA (177 aa).

The active site involves Cys-10.

This sequence belongs to the MsrA Met sulfoxide reductase family.

The catalysed reaction is L-methionyl-[protein] + [thioredoxin]-disulfide + H2O = L-methionyl-(S)-S-oxide-[protein] + [thioredoxin]-dithiol. The enzyme catalyses [thioredoxin]-disulfide + L-methionine + H2O = L-methionine (S)-S-oxide + [thioredoxin]-dithiol. Functionally, has an important function as a repair enzyme for proteins that have been inactivated by oxidation. Catalyzes the reversible oxidation-reduction of methionine sulfoxide in proteins to methionine. The protein is Peptide methionine sulfoxide reductase MsrA of Saccharolobus solfataricus (strain ATCC 35092 / DSM 1617 / JCM 11322 / P2) (Sulfolobus solfataricus).